We begin with the raw amino-acid sequence, 330 residues long: ATP-dependent Clp protease proteolytic subunit-related protein 3, chloroplastic (330 aa).

Residues 1–43 (MASCLQASMNSLLPRSSSFSPHPPLSSNSSGRRNLKTFRYAFR) constitute a chloroplast transit peptide. Residues 7-32 (ASMNSLLPRSSSFSPHPPLSSNSSGR) form a disordered region. Positions 8 to 30 (SMNSLLPRSSSFSPHPPLSSNSS) are enriched in low complexity.

It belongs to the peptidase S14 family. Component of the chloroplastic Clp protease core complex which consist of at least 16 proteins: CLPP4 (3 copies), CLPP5 (3 copies), CLPR4 (2 copies), ClpP1 (1 copy), CLPP6 (1 copy), CLPR2 (1 copy), CLPT1 (1 copy), CLPT2 (1 copy) and 3 copies of CLPP3 and/or CLPR1 and/or CLPR3. The core complex is organized in two heptameric rings, one containing CLPP3,4,5,6 in a 1:2:3:1 ratio and the other CLPP1 and CLPR1,2,3,4 in a 3:1:1:1:1 ratio.

Its subcellular location is the plastid. The protein localises to the chloroplast. This is ATP-dependent Clp protease proteolytic subunit-related protein 3, chloroplastic from Arabidopsis thaliana (Mouse-ear cress).